The sequence spans 373 residues: Ras association domain-containing protein 7 (373 aa).

The Ras-associating domain occupies 6–89; that stretch reads AAMELKVWVD…VQFVLRRTGP (84 aa). Residues 122-150 are disordered; sequence CEPRKTLTPEPAPSLSRPGPAAPVTPTPG. 2 coiled-coil regions span residues 175–227 and 248–297; these read WEQE…AAEA and QERQ…QFIQ. The disordered stretch occupies residues 300–356; the sequence is GAALPPPPRPDRGPPGTQGPLPPAREESLLGAPSESHAGAQPRPRGGPHDAELLEVA.

Interacts with MAP2K7 and GTP-bound NRAS. Post-translationally, polyubiquitinated and degraded by the proteasome upon prolonged stress stimuli.

Its subcellular location is the cytoplasm. The protein resides in the cytoskeleton. The protein localises to the microtubule organizing center. It localises to the centrosome. Negatively regulates stress-induced JNK activation and apoptosis by promoting MAP2K7 phosphorylation and inhibiting its ability to activate JNK. Following prolonged stress, anti-apoptotic effect stops because of degradation of RASSF7 protein via the ubiquitin-proteasome pathway. Required for the activation of AURKB and chromosomal congression during mitosis where it stimulates microtubule polymerization. The chain is Ras association domain-containing protein 7 (RASSF7) from Homo sapiens (Human).